Here is a 134-residue protein sequence, read N- to C-terminus: Ribosome-binding factor A (134 aa).

This sequence belongs to the RbfA family. As to quaternary structure, monomer. Binds 30S ribosomal subunits, but not 50S ribosomal subunits or 70S ribosomes.

Its subcellular location is the cytoplasm. Its function is as follows. One of several proteins that assist in the late maturation steps of the functional core of the 30S ribosomal subunit. Associates with free 30S ribosomal subunits (but not with 30S subunits that are part of 70S ribosomes or polysomes). Required for efficient processing of 16S rRNA. May interact with the 5'-terminal helix region of 16S rRNA. This Baumannia cicadellinicola subsp. Homalodisca coagulata protein is Ribosome-binding factor A.